Reading from the N-terminus, the 413-residue chain is MFDGSNLGRNTIAMVLAGGKGERLMPLTLRRAKPSVTFGGKYKIIDFVLSNLFNSGIRRMYILTQYRAYSLNKHIRESWGKWTGLGEFCVAISPETSSDSEQWFKGTADAILQYLRFVETADADYVAVFGGDHIYKMDVTQMIQFHRMNRADLTIASLEVPKEEASRFGVFSVDDDNRVTAFTEKPKDPETIPGRETCFASMGNYIFPTRKLIEVLLEGKKHYEDLDFGKHVIPMMLEKGDRIYAYNFNDNLVPGMKSEERGYWKDVGTLDSYYEANMDLIHVSPQLNLYNYKWPILTNQGNLPPAKTVFDEEGRRGVNIDSYVTGGCITSGSTVRRSILGPMCKINSYSLVEDSILFEGVTVGRHVKIKKAIIDKGVVIPDGAEIGCNHEDDIKNGYTITESGIVVVPRKDR.

Alpha-D-glucose 1-phosphate-binding positions include Gly169, 184 to 185, and Ser201; that span reads EK.

This sequence belongs to the bacterial/plant glucose-1-phosphate adenylyltransferase family. In terms of assembly, homotetramer.

The catalysed reaction is alpha-D-glucose 1-phosphate + ATP + H(+) = ADP-alpha-D-glucose + diphosphate. It functions in the pathway glycan biosynthesis; glycogen biosynthesis. Involved in the biosynthesis of ADP-glucose, a building block required for the elongation reactions to produce glycogen. Catalyzes the reaction between ATP and alpha-D-glucose 1-phosphate (G1P) to produce pyrophosphate and ADP-Glc. In Trichlorobacter lovleyi (strain ATCC BAA-1151 / DSM 17278 / SZ) (Geobacter lovleyi), this protein is Glucose-1-phosphate adenylyltransferase.